A 1597-amino-acid chain; its full sequence is Pentafunctional AROM polypeptide (1597 aa).

A 3-dehydroquinate synthase region spans residues Met1–Asn384. Residues Asp44 to Asn46, Glu81 to Lys84, Gly114 to Val116, and Asp119 contribute to the NAD(+) site. Arg130 is a binding site for 7-phospho-2-dehydro-3-deoxy-D-arabino-heptonate. Thr139–Thr140 lines the NAD(+) pocket. Residues Asp146 and Lys152 each coordinate 7-phospho-2-dehydro-3-deoxy-D-arabino-heptonate. NAD(+) is bound at residue Lys161. Asn162 serves as a coordination point for 7-phospho-2-dehydro-3-deoxy-D-arabino-heptonate. NAD(+) is bound by residues Phe179–Thr182 and Asn190. Zn(2+) is bound at residue Glu194. Residues Glu194–Lys197 and Lys250 contribute to the 7-phospho-2-dehydro-3-deoxy-D-arabino-heptonate site. Glu260 (proton acceptor; for 3-dehydroquinate synthase activity) is an active-site residue. Residues Arg264–Asn268 and His271 each bind 7-phospho-2-dehydro-3-deoxy-D-arabino-heptonate. His271 contacts Zn(2+). His275 serves as the catalytic Proton acceptor; for 3-dehydroquinate synthase activity. 2 residues coordinate 7-phospho-2-dehydro-3-deoxy-D-arabino-heptonate: His287 and Lys356. Position 287 (His287) interacts with Zn(2+). Positions Val397–Val842 are EPSP synthase. The active-site For EPSP synthase activity is the Cys824. The tract at residues Ala866–Ser1057 is shikimate kinase. Gly872 to Thr879 is a binding site for ATP. Residues Leu1058–Glu1278 are 3-dehydroquinase. His1181 (proton acceptor; for 3-dehydroquinate dehydratase activity) is an active-site residue. The active-site Schiff-base intermediate with substrate; for 3-dehydroquinate dehydratase activity is the Lys1209. Positions Ser1291 to Thr1597 are shikimate dehydrogenase.

It in the N-terminal section; belongs to the sugar phosphate cyclases superfamily. Dehydroquinate synthase family. In the 2nd section; belongs to the EPSP synthase family. This sequence in the 3rd section; belongs to the shikimate kinase family. The protein in the 4th section; belongs to the type-I 3-dehydroquinase family. It in the C-terminal section; belongs to the shikimate dehydrogenase family. Homodimer. Requires Zn(2+) as cofactor.

The protein resides in the cytoplasm. It carries out the reaction 7-phospho-2-dehydro-3-deoxy-D-arabino-heptonate = 3-dehydroquinate + phosphate. It catalyses the reaction 3-dehydroquinate = 3-dehydroshikimate + H2O. The enzyme catalyses shikimate + NADP(+) = 3-dehydroshikimate + NADPH + H(+). The catalysed reaction is shikimate + ATP = 3-phosphoshikimate + ADP + H(+). It carries out the reaction 3-phosphoshikimate + phosphoenolpyruvate = 5-O-(1-carboxyvinyl)-3-phosphoshikimate + phosphate. Its pathway is metabolic intermediate biosynthesis; chorismate biosynthesis; chorismate from D-erythrose 4-phosphate and phosphoenolpyruvate: step 2/7. It functions in the pathway metabolic intermediate biosynthesis; chorismate biosynthesis; chorismate from D-erythrose 4-phosphate and phosphoenolpyruvate: step 3/7. The protein operates within metabolic intermediate biosynthesis; chorismate biosynthesis; chorismate from D-erythrose 4-phosphate and phosphoenolpyruvate: step 4/7. It participates in metabolic intermediate biosynthesis; chorismate biosynthesis; chorismate from D-erythrose 4-phosphate and phosphoenolpyruvate: step 5/7. Its pathway is metabolic intermediate biosynthesis; chorismate biosynthesis; chorismate from D-erythrose 4-phosphate and phosphoenolpyruvate: step 6/7. The AROM polypeptide catalyzes 5 consecutive enzymatic reactions in prechorismate polyaromatic amino acid biosynthesis. The sequence is that of Pentafunctional AROM polypeptide from Ajellomyces dermatitidis (strain ER-3 / ATCC MYA-2586) (Blastomyces dermatitidis).